Here is a 146-residue protein sequence, read N- to C-terminus: Mitochondrial import receptor subunit TOM20 homolog B (146 aa).

The Mitochondrial intermembrane portion of the chain corresponds to 1-5; sequence MMGGS. Residues 6–25 form a helical membrane-spanning segment; it reads SSRIAAGLGAALFVGYCIYF. Residues 26 to 146 are Cytoplasmic-facing; that stretch reads DRKRRSDPNY…AQSISDDDIE (121 aa). A compositionally biased stretch (basic residues) spans 37–47; sequence NKLRERRKKQK. The disordered stretch occupies residues 37–56; sequence NKLRERRKKQKAAQEKAGLS. Ser-141 carries the post-translational modification Phosphoserine.

This sequence belongs to the Tom20 family. In terms of assembly, forms part of the preprotein translocase complex of the outer mitochondrial membrane (TOM complex). Interacts with tom22.

The protein resides in the mitochondrion outer membrane. In terms of biological role, central component of the receptor complex responsible for the recognition and translocation of cytosolically synthesized mitochondrial preproteins. Together with tom22 functions as the transit peptide receptor at the surface of the mitochondrion outer membrane and facilitates the movement of preproteins into the tom40 translocation pore. The sequence is that of Mitochondrial import receptor subunit TOM20 homolog B (tomm20b) from Danio rerio (Zebrafish).